An 82-amino-acid chain; its full sequence is Turripeptide OL139 (82 aa).

The disordered stretch occupies residues 58-82 (HRTTRDTADKTHGGSQRDRFFQSIA).

Post-translationally, contains 6 disulfide bonds. As to expression, expressed by the venom duct.

The protein resides in the secreted. Functionally, acts as a neurotoxin by inhibiting an ion channel. The sequence is that of Turripeptide OL139 from Iotyrris olangoensis (Sea snail).